A 541-amino-acid polypeptide reads, in one-letter code: Nectin 1b (541 aa).

The N-terminal stretch at 1 to 21 (MDKQESFFVGHKSHRCSQNRS) is a signal peptide. The Extracellular portion of the chain corresponds to 22–396 (VSQIHQRTSR…PAELHSSGAA (375 aa)). Residues N51, N105, N180, N242, N326, N337, and N372 are each glycosylated (N-linked (GlcNAc...) asparagine). Residues 77-182 (GDTVELKCLF…GNRENMVNLT (106 aa)) form the Ig-like V-type domain. An intrachain disulfide couples C84 to C165. Ig-like C2-type domains are found at residues 187–282 (PVTK…VILN) and 287–374 (PEVK…VNVT). Cystine bridges form between C212/C266 and C309/C356. A helical transmembrane segment spans residues 397–417 (IGGAVGGVALLVAAIALLVFF). Over 418-541 (LRRRQRTFKG…SVISKKEWYV (124 aa)) the chain is Cytoplasmic. The interval 440–507 (YSKAGGMPAH…VDEGESRDYD (68 aa)) is disordered. Basic and acidic residues predominate over residues 479-493 (SGDRDFDGNSEDLKR).

This sequence belongs to the nectin family. In terms of assembly, cis- and trans-homodimer. Can form trans-heterodimers. As to expression, expressed in the developing eye and nervous system.

The protein localises to the cell membrane. It is found in the cell junction. The protein resides in the adherens junction. Functionally, cell adhesion molecule that promotes cell-cell contacts and plays important roles in the development of the nervous system. Acts by forming homophilic or heterophilic trans-dimers. The protein is Nectin 1b of Danio rerio (Zebrafish).